A 1648-amino-acid polypeptide reads, in one-letter code: Cortactin-binding protein 2 (1648 aa).

Disordered regions lie at residues 1–26 (MATD…TAEA), 200–250 (EEKK…EEAH), 322–439 (PLTV…PGLN), 451–476 (GNAN…PTSR), and 492–608 (ALSR…PSID). Residues 119 to 274 (KMQERMSAQL…MEQMKKGSDG (156 aa)) are a coiled coil. Basic and acidic residues-rich tracts occupy residues 200 to 218 (EEKK…EKQR) and 225 to 250 (QLEK…EEAH). Polar residues-rich tracts occupy residues 330-342 (STGS…NTKG) and 372-392 (LPSS…APDL). Residues 393–415 (SNSTPSTPSSTAPAAAQTPGTAP) are compositionally biased toward low complexity. Positions 492 to 503 (ALSRFTSPQAGA) are enriched in polar residues. At Arg495 the chain carries Asymmetric dimethylarginine. 6 ANK repeats span residues 699 to 729 (GRPT…DINY), 733 to 762 (DGHS…RVDA), 766 to 795 (NGFT…NINH), 799 to 828 (GGQT…DRSI), 832 to 861 (DGWT…RAHG), and 901 to 931 (EGWT…EPER). The segment at 1438–1492 (SGAWRKVNTSPRKKPGHFSSPTWNKPDPKREGMRNKTIPHLNTNRNSSLSKQQSL) is disordered. Polar residues predominate over residues 1477-1492 (HLNTNRNSSLSKQQSL). Position 1510 is a phosphoserine (Ser1510). Residues 1522–1648 (SMCSSKSESD…KHEQVEKPNK (127 aa)) form a disordered region. Positions 1528-1547 (SESDISKIADSRDDLRKFDS) are enriched in basic and acidic residues. Composition is skewed to polar residues over residues 1548 to 1557 (SRTNPGTSAP) and 1571 to 1584 (PPSS…SNSK). The span at 1609-1623 (SQNTKRNSSSSNTRQ) shows a compositional bias: low complexity. Over residues 1630 to 1648 (SKEENWTLDKHEQVEKPNK) the composition is skewed to basic and acidic residues.

Interacts with CTTN/cortactin SH3 domain. Interacts with STRN, STRN4/zinedin and MOB4/phocein; this interactions mediate the association with the STRIPAK core complex and may regulate dendritic spine distribution of the STRIPAK complex in hippocampal neurons. Activation of glutamate receptors weakens the interaction with STRN and STRN4. Isoform 2 is predominantly expressed in brain (at protein level). In the brain, expressed at high levels in hypothalamus and striatum and at lower levels in cerebellum and cortex.

It is found in the cytoplasm. The protein localises to the cell cortex. Its subcellular location is the cell projection. The protein resides in the dendritic spine. In terms of biological role, regulates the dendritic spine distribution of CTTN/cortactin in hippocampal neurons, and thus controls dendritic spinogenesis and dendritic spine maintenance. Associates with the striatin-interacting phosphatase and kinase (STRIPAK) core complex to regulate dendritic spine distribution of the STRIPAK complex in hippocampal neurons. The protein is Cortactin-binding protein 2 (Cttnbp2) of Mus musculus (Mouse).